Reading from the N-terminus, the 244-residue chain is 14-3-3 protein beta/alpha (244 aa).

Met-1 carries the post-translational modification N-acetylmethionine.

The protein belongs to the 14-3-3 family. Homodimer, and heterodimer with other family members.

It localises to the cytoplasm. Functionally, adapter protein implicated in the regulation of a large spectrum of both general and specialized signaling pathways. Binds to a large number of partners, usually by recognition of a phosphoserine or phosphothreonine motif. Binding generally results in the modulation of the activity of the binding partner. The chain is 14-3-3 protein beta/alpha (ywhab) from Xenopus tropicalis (Western clawed frog).